The following is a 156-amino-acid chain: Small ribosomal subunit protein uS7 (156 aa).

It belongs to the universal ribosomal protein uS7 family. As to quaternary structure, part of the 30S ribosomal subunit. Contacts proteins S9 and S11.

Functionally, one of the primary rRNA binding proteins, it binds directly to 16S rRNA where it nucleates assembly of the head domain of the 30S subunit. Is located at the subunit interface close to the decoding center, probably blocks exit of the E-site tRNA. The sequence is that of Small ribosomal subunit protein uS7 from Leuconostoc citreum (strain KM20).